The chain runs to 391 residues: Mannonate dehydratase (391 aa).

The protein belongs to the mannonate dehydratase family. Fe(2+) serves as cofactor. Mn(2+) is required as a cofactor.

It catalyses the reaction D-mannonate = 2-dehydro-3-deoxy-D-gluconate + H2O. Its pathway is carbohydrate metabolism; pentose and glucuronate interconversion. Its function is as follows. Catalyzes the dehydration of D-mannonate. This chain is Mannonate dehydratase, found in Marinomonas sp. (strain MWYL1).